Here is a 311-residue protein sequence, read N- to C-terminus: Acetyl-coenzyme A carboxylase carboxyl transferase subunit beta (311 aa).

The CoA carboxyltransferase N-terminal domain maps to 27 to 296 (LWTKCGHCSA…AEAADAPEAG (270 aa)). 4 residues coordinate Zn(2+): cysteine 31, cysteine 34, cysteine 50, and cysteine 53. The C4-type zinc finger occupies 31–53 (CGHCSAVLYRPELERNQEVCPKC). Positions 286–299 (AAEAADAPEAGEQP) are enriched in low complexity. Residues 286–311 (AAEAADAPEAGEQPSEATDPVGEHWD) form a disordered region.

This sequence belongs to the AccD/PCCB family. As to quaternary structure, acetyl-CoA carboxylase is a heterohexamer composed of biotin carboxyl carrier protein (AccB), biotin carboxylase (AccC) and two subunits each of ACCase subunit alpha (AccA) and ACCase subunit beta (AccD). Zn(2+) serves as cofactor.

It is found in the cytoplasm. The enzyme catalyses N(6)-carboxybiotinyl-L-lysyl-[protein] + acetyl-CoA = N(6)-biotinyl-L-lysyl-[protein] + malonyl-CoA. It participates in lipid metabolism; malonyl-CoA biosynthesis; malonyl-CoA from acetyl-CoA: step 1/1. In terms of biological role, component of the acetyl coenzyme A carboxylase (ACC) complex. Biotin carboxylase (BC) catalyzes the carboxylation of biotin on its carrier protein (BCCP) and then the CO(2) group is transferred by the transcarboxylase to acetyl-CoA to form malonyl-CoA. The polypeptide is Acetyl-coenzyme A carboxylase carboxyl transferase subunit beta (Alkalilimnicola ehrlichii (strain ATCC BAA-1101 / DSM 17681 / MLHE-1)).